The primary structure comprises 831 residues: Translation initiation factor IF-2 (831 aa).

The 171-residue stretch at 329 to 499 (TRAPVVTVMG…LLISEMQDLK (171 aa)) folds into the tr-type G domain. A G1 region spans residues 338 to 345 (GHVDHGKT). 338–345 (GHVDHGKT) provides a ligand contact to GTP. Residues 363–367 (GITQH) are G2. Positions 385-388 (DTPG) are G3. GTP is bound by residues 385 to 389 (DTPGH) and 439 to 442 (NKID). Residues 439–442 (NKID) form a G4 region. Residues 475–477 (SAL) are G5.

It belongs to the TRAFAC class translation factor GTPase superfamily. Classic translation factor GTPase family. IF-2 subfamily.

It localises to the cytoplasm. In terms of biological role, one of the essential components for the initiation of protein synthesis. Protects formylmethionyl-tRNA from spontaneous hydrolysis and promotes its binding to the 30S ribosomal subunits. Also involved in the hydrolysis of GTP during the formation of the 70S ribosomal complex. The polypeptide is Translation initiation factor IF-2 (Rickettsia typhi (strain ATCC VR-144 / Wilmington)).